A 137-amino-acid polypeptide reads, in one-letter code: Small ribosomal subunit protein bS6 (137 aa).

The disordered stretch occupies residues 96-137; it reads ITEASPMAKAKDERDTRRSSEERAPRAEAAEEVEESAENTAE. Basic and acidic residues predominate over residues 104 to 124; the sequence is KAKDERDTRRSSEERAPRAEA. Residues 125–137 are compositionally biased toward acidic residues; it reads AEEVEESAENTAE.

This sequence belongs to the bacterial ribosomal protein bS6 family.

Its function is as follows. Binds together with bS18 to 16S ribosomal RNA. This Shewanella halifaxensis (strain HAW-EB4) protein is Small ribosomal subunit protein bS6.